Here is a 394-residue protein sequence, read N- to C-terminus: MQTACSGNLCGYQLMFSLSTVVTVCRSLRSRNRHWFLKLLGVRLTIAMRCALENISNVAKNNVQAAAKKEIKQKRGMTKSKATSSLQSVIGLHVEPVEKVQSPEPMDMSEVSNALEAFSQNILEMGVDDIDKDDHENPQLCSEYVNDIYLYMRHLEREFKVRTDYMAMQEITERMRTILIDWLVQVHLRFHLLQETLFLTIQILDRYLEGASVSKTKLQLVGVTSMLIAAYEEMYAEIGDFVYITDNAYSKAQIRAMECNILRKLDFNLGKPLCIHFLRRCSKAGGVDGHKHTLSKYIMELTLXEYSFVKYDXEIAAAALLSTRFWDEDMEWTKSLVHYSAYSEGHLGPIVQKMAVLSQQSHPSPNSRLDQEEDMASSKFMSDQQATQELKSIR.

Residues 360 to 394 (QSHPSPNSRLDQEEDMASSKFMSDQQATQELKSIR) are disordered. The span at 379–394 (KFMSDQQATQELKSIR) shows a compositional bias: polar residues.

Belongs to the cyclin family. Cyclin AB subfamily. In terms of assembly, interacts with the CDK1 protein kinase to form a serine/threonine kinase holoenzyme complex also known as maturation promoting factor (MPF). The cyclin subunit imparts substrate specificity to the complex.

Functionally, essential for the control of the cell cycle at the G2/M (mitosis) transition. The polypeptide is G2/mitotic-specific cyclin-B (Patiria pectinifera (Starfish)).